The following is a 1838-amino-acid chain: Collagen alpha-1(V) chain (1838 aa).

Positions 1–36 are cleaved as a signal peptide; the sequence is MDVHTRWKAARPGALLLSSPLLLFLLLLWAPPSSRA. Positions 72–244 constitute a Laminin G-like domain; it reads DVAYRVSKDA…DYCEHYSPDC (173 aa). The nonhelical region stretch occupies residues 231 to 443; it reads RAAYDYCEHY…MPANQDTIFE (213 aa). Sulfotyrosine occurs at positions 234, 236, 240, 262, and 263. Disordered regions lie at residues 242 to 545 and 559 to 1574; these read PDCD…QESQ and GPAG…EVIQ. Residues 258 to 268 show a composition bias toward acidic residues; it reads NPDEYYPEGEG. Composition is skewed to low complexity over residues 335-345, 374-387, 413-428, and 460-469; these read DYDYVPPDDYY, VPTS…TSNP, YDPY…VSPS, and IIEPGMLIEG. The segment at 444 to 558 is interrupted collagenous region; sequence GIGGPRGEKG…ILQQARLALR (115 aa). Residues 470-485 are compositionally biased toward pro residues; sequence PPGPEGPAGLPGPPGT. Low complexity-rich tracts occupy residues 506 to 523 and 559 to 570; these read LPGA…LMLP and GPAGPMGLTGRP. Positions 559–1570 are triple-helical region; the sequence is GPAGPMGLTG…GLPGPPGPPG (1012 aa). 3 positions are modified to 4-hydroxyproline: proline 570, proline 576, and proline 621. A 5-hydroxylysine modification is found at lysine 627. Proline 639 is modified (4-hydroxyproline). Residue lysine 642 is modified to 5-hydroxylysine. Residues proline 648, proline 654, proline 657, proline 675, and proline 678 each carry the 4-hydroxyproline modification. The span at 671 to 686 shows a compositional bias: low complexity; sequence PRGLPGEPGPRGLLGP. 2 positions are modified to 3-hydroxyproline: proline 680 and proline 686. Pro residues predominate over residues 687–696; that stretch reads KGPPGPPGPP. A 4-hydroxyproline mark is found at proline 690, proline 696, and proline 705. Position 708 is a 5-hydroxylysine (lysine 708). A 4-hydroxyproline mark is found at proline 717, proline 720, proline 726, and proline 732. Residues 722–741 are compositionally biased toward low complexity; the sequence is QQGNPGAQGLPGPQGAIGPP. A 5-hydroxylysine modification is found at lysine 744. Low complexity predominate over residues 747–756; that stretch reads LGKPGLPGMP. 4-hydroxyproline is present on residues proline 750, proline 756, proline 762, proline 765, and proline 771. Lysine 774 is subject to 5-hydroxylysine. 2 positions are modified to 4-hydroxyproline: proline 780 and proline 789. 5-hydroxylysine is present on residues lysine 795, lysine 804, lysine 807, and lysine 810. Proline 816 bears the 4-hydroxyproline mark. A 5-hydroxylysine modification is found at lysine 819. Proline 834 is modified (4-hydroxyproline). Residues 837–846 are compositionally biased toward basic and acidic residues; that stretch reads RGEDGPEGPK. Residues lysine 846 and lysine 864 each carry the 5-hydroxylysine modification. Residues proline 870, proline 873, and proline 876 each carry the 4-hydroxyproline modification. Lysine 882 is subject to 5-hydroxylysine. 4-hydroxyproline is present on residues proline 888 and proline 891. Residue lysine 897 is modified to 5-hydroxylysine. 4-hydroxyproline occurs at positions 903 and 906. A compositionally biased stretch (low complexity) spans 908-917; that stretch reads PRGQRGPTGP. A 4-hydroxyproline mark is found at proline 930 and proline 945. Low complexity-rich tracts occupy residues 971–990 and 999–1011; these read KDGL…QGKT and VGPQ…TGPM. 4-hydroxyproline is present on residues proline 1017, proline 1020, proline 1023, and proline 1029. Residues 1088 to 1104 show a composition bias toward low complexity; it reads SPGERGPAGAAGPIGIP. Residues 1106-1115 show a composition bias toward pro residues; that stretch reads RPGPQGPPGP. 4-hydroxyproline occurs at positions 1221 and 1224. A compositionally biased stretch (low complexity) spans 1259-1268; that stretch reads PSGAPGADGP. A compositionally biased stretch (gly residues) spans 1294–1303; sequence GLPGEGGPLG. Pro residues-rich tracts occupy residues 1380 to 1398 and 1454 to 1469; these read TGEP…PGPA and SPGP…PPGL. Residues proline 1467 and proline 1470 each carry the 4-hydroxyproline modification. The segment covering 1485-1494 has biased composition (low complexity); sequence PGLIGLIGPP. Residues 1526-1541 show a composition bias toward pro residues; that stretch reads PLGPPGPPGLPGPPGP. Over residues 1542 to 1554 the composition is skewed to low complexity; sequence KGAKGSSGPTGPK. The nonhelical region stretch occupies residues 1571–1605; sequence EVIQPLPIQASRTRRNIDASQLLDDGAGESYVDYA. 2 positions are modified to sulfotyrosine: tyrosine 1601 and tyrosine 1604. The Fibrillar collagen NC1 domain maps to 1609-1837; the sequence is EEIFGSLNSL…GFEVGPACFL (229 aa).

Belongs to the fibrillar collagen family. As to quaternary structure, trimers of two alpha 1(V) and one alpha 2(V) chains in most tissues and trimers of one alpha 1(V), one alpha 2(V), and one alpha 3(V) chains in placenta. Interacts with CSPG4. Post-translationally, hydroxylation on proline residues within the sequence motif, GXPG, is most likely to be 4-hydroxy as this fits the requirement for 4-hydroxylation in vertebrates. In terms of processing, sulfated on 40% of tyrosines. As to expression, widely expressed. Isoform 2 is more highly expressed in liver, kidney and lung.

Its subcellular location is the secreted. It is found in the extracellular space. It localises to the extracellular matrix. Its function is as follows. Type V collagen is a member of group I collagen (fibrillar forming collagen). It is a minor connective tissue component of nearly ubiquitous distribution. Type V collagen binds to DNA, heparan sulfate, thrombospondin, heparin, and insulin. Transcriptionally activated by CEBPZ, which recognizes a CCAAT-like motif, CAAAT in the COL5A1 promoter. The polypeptide is Collagen alpha-1(V) chain (Col5a1) (Mus musculus (Mouse)).